The chain runs to 146 residues: Protein PBDC1 homolog (146 aa).

This sequence belongs to the PBDC1 family.

The protein resides in the cytoplasm. In Saccharomyces cerevisiae (strain ATCC 204508 / S288c) (Baker's yeast), this protein is Protein PBDC1 homolog.